The sequence spans 573 residues: Proline--tRNA ligase (573 aa).

It belongs to the class-II aminoacyl-tRNA synthetase family. ProS type 1 subfamily. As to quaternary structure, homodimer.

It is found in the cytoplasm. It catalyses the reaction tRNA(Pro) + L-proline + ATP = L-prolyl-tRNA(Pro) + AMP + diphosphate. Functionally, catalyzes the attachment of proline to tRNA(Pro) in a two-step reaction: proline is first activated by ATP to form Pro-AMP and then transferred to the acceptor end of tRNA(Pro). As ProRS can inadvertently accommodate and process non-cognate amino acids such as alanine and cysteine, to avoid such errors it has two additional distinct editing activities against alanine. One activity is designated as 'pretransfer' editing and involves the tRNA(Pro)-independent hydrolysis of activated Ala-AMP. The other activity is designated 'posttransfer' editing and involves deacylation of mischarged Ala-tRNA(Pro). The misacylated Cys-tRNA(Pro) is not edited by ProRS. The chain is Proline--tRNA ligase from Caldanaerobacter subterraneus subsp. tengcongensis (strain DSM 15242 / JCM 11007 / NBRC 100824 / MB4) (Thermoanaerobacter tengcongensis).